We begin with the raw amino-acid sequence, 69 residues long: Sec-independent protein translocase protein TatA (69 aa).

The helical transmembrane segment at Met1–Phe21 threads the bilayer. A disordered region spans residues Ser43 to Ala69.

The protein belongs to the TatA/E family. In terms of assembly, the Tat system comprises two distinct complexes: a TatABC complex, containing multiple copies of TatA, TatB and TatC subunits, and a separate TatA complex, containing only TatA subunits. Substrates initially bind to the TatABC complex, which probably triggers association of the separate TatA complex to form the active translocon.

It localises to the cell inner membrane. Functionally, part of the twin-arginine translocation (Tat) system that transports large folded proteins containing a characteristic twin-arginine motif in their signal peptide across membranes. TatA could form the protein-conducting channel of the Tat system. This Anaeromyxobacter sp. (strain Fw109-5) protein is Sec-independent protein translocase protein TatA.